Here is a 94-residue protein sequence, read N- to C-terminus: Co-chaperonin GroES (94 aa).

This sequence belongs to the GroES chaperonin family. In terms of assembly, heptamer of 7 subunits arranged in a ring. Interacts with the chaperonin GroEL.

Its subcellular location is the cytoplasm. Together with the chaperonin GroEL, plays an essential role in assisting protein folding. The GroEL-GroES system forms a nano-cage that allows encapsulation of the non-native substrate proteins and provides a physical environment optimized to promote and accelerate protein folding. GroES binds to the apical surface of the GroEL ring, thereby capping the opening of the GroEL channel. The chain is Co-chaperonin GroES from Enterococcus faecalis (strain ATCC 700802 / V583).